The following is a 696-amino-acid chain: MSTQSPNHHEDITKTSSVNMTTTTTTTKTKAAAKAGTNAAPKQKTQMHRRSRTGCYTCRLRRKKCDEGSPMCTACKHLGLCCEYKRPMWWSNNDARRKQKDEIKMIIKRKKLSEKSSHTIQTSINTPPGLSHSLPTSATFSDPLDRNRSASIDSHFGFNFNSPQHGQDFAAFATPQIHVNGEYMFPPFSPYEIDMKTERQIFINDIPTLRESTVSTFSTYQTPPPPGTILPSFPLEGEWTEQVFSERRESLTEETFNANFFDFACDPAMASSQVAIELDDGDQKLLDHFVQHVLPTIFPILESNQHGSISSELVLPSLANNKGYLHCCLSIAAQHFKSTMGIQNEEIDNDIMRHRYATITWLCEALNRDENHQPILDATLGLIFFQCIVGRPEDTLPDIPWHQHFQAVVSLVQKLDLAGLVSDITKPLAHTPFNMTLTSWIDILGATMLGSSPLFAHTYRNKHLSINNHSLGLRELMGCEDRVMYLISEIACLESLKNQGMDDITLCQHVRGLGDEISNTEVNEGTLVEPYNANGTLSPKQLSKNITAAFRLAARIYLCSLVPGFYPAQPSCMGLVEKLTAVLQLIPSGVNGYDRSLTWVYLIGGSVSVPGSSFRDFFENRVAQLGDVANSGSFGRMTVLLREVWLQYEAILAAAEAAAGTSSLSSETPQQQQQVNAHYVRWREVMQIKGWDYLLI.

Residues 1 to 48 form a disordered region; that stretch reads MSTQSPNHHEDITKTSSVNMTTTTTTTKTKAAAKAGTNAAPKQKTQMH. A compositionally biased stretch (low complexity) spans 21 to 40; that stretch reads TTTTTTTKTKAAAKAGTNAA. A DNA-binding region (zn(2)-C6 fungal-type) is located at residues 55-82; it reads CYTCRLRRKKCDEGSPMCTACKHLGLCC. The interval 112 to 145 is disordered; it reads LSEKSSHTIQTSINTPPGLSHSLPTSATFSDPLD. Residues 118–140 are compositionally biased toward polar residues; that stretch reads HTIQTSINTPPGLSHSLPTSATF.

It is found in the nucleus. In terms of biological role, may be involved in fruiting body development. This is Transcriptional regulatory protein pro1 (adv-1) from Neurospora crassa (strain ATCC 24698 / 74-OR23-1A / CBS 708.71 / DSM 1257 / FGSC 987).